Reading from the N-terminus, the 500-residue chain is Cysteine--tRNA ligase (500 aa).

Cys30 is a Zn(2+) binding site. A 'HIGH' region motif is present at residues 32 to 42 (PTVYDYAHIGN). Positions 224, 263, and 267 each coordinate Zn(2+). The 'KMSKS' region signature appears at 296 to 300 (KMSKS). An ATP-binding site is contributed by Lys299.

This sequence belongs to the class-I aminoacyl-tRNA synthetase family. Monomer. It depends on Zn(2+) as a cofactor.

Its subcellular location is the cytoplasm. It catalyses the reaction tRNA(Cys) + L-cysteine + ATP = L-cysteinyl-tRNA(Cys) + AMP + diphosphate. In Bartonella bacilliformis (strain ATCC 35685 / KC583 / Herrer 020/F12,63), this protein is Cysteine--tRNA ligase.